The following is a 484-amino-acid chain: uncharacterized protein (484 aa).

The region spanning 334-484 (IIIRQITDND…ENEWIYEVNL (151 aa)) is the N-acetyltransferase domain.

This is an uncharacterized protein from Methanocaldococcus jannaschii (strain ATCC 43067 / DSM 2661 / JAL-1 / JCM 10045 / NBRC 100440) (Methanococcus jannaschii).